We begin with the raw amino-acid sequence, 150 residues long: Galectin-1 (150 aa).

The region spanning 9-141 (NQIKLQDDFK…FSSPVTVDIH (133 aa)) is the Galectin domain. Residues His51, Arg55, Asn64, and Glu75 each coordinate a carbohydrate.

In terms of assembly, homotetramer. Oligomerization is required for carbohydrate binding. In terms of tissue distribution, most abundant in fruiting bodies. Very low levels of expression in asexual vegetative mycelia.

The protein resides in the secreted. Its subcellular location is the extracellular space. It localises to the extracellular matrix. The protein localises to the cell wall. It is found in the endomembrane system. In terms of biological role, binds lactose. May play a role in fruiting body formation. The sequence is that of Galectin-1 (Cgl1) from Coprinopsis cinerea (strain Okayama-7 / 130 / ATCC MYA-4618 / FGSC 9003) (Inky cap fungus).